Consider the following 276-residue polypeptide: NAD kinase (276 aa).

D61 serves as the catalytic Proton acceptor. Residues 61–62 (DG), R66, 135–136 (NE), R146, H163, D165, and A200 contribute to the NAD(+) site.

Belongs to the NAD kinase family. A divalent metal cation is required as a cofactor.

It is found in the cytoplasm. It catalyses the reaction NAD(+) + ATP = ADP + NADP(+) + H(+). Involved in the regulation of the intracellular balance of NAD and NADP, and is a key enzyme in the biosynthesis of NADP. Catalyzes specifically the phosphorylation on 2'-hydroxyl of the adenosine moiety of NAD to yield NADP. In Chloroflexus aurantiacus (strain ATCC 29366 / DSM 635 / J-10-fl), this protein is NAD kinase.